The chain runs to 271 residues: NADPH-dependent 7-cyano-7-deazaguanine reductase (271 aa).

81 to 83 is a substrate binding site; it reads IES. 83-84 is a binding site for NADPH; that stretch reads SK. The active-site Thioimide intermediate is the C177. Catalysis depends on D184, which acts as the Proton donor. Residue 216 to 217 participates in substrate binding; it reads HE. Position 245–246 (245–246) interacts with NADPH; the sequence is RG.

This sequence belongs to the GTP cyclohydrolase I family. QueF type 2 subfamily. Homodimer.

The protein localises to the cytoplasm. The catalysed reaction is 7-aminomethyl-7-carbaguanine + 2 NADP(+) = 7-cyano-7-deazaguanine + 2 NADPH + 3 H(+). It functions in the pathway tRNA modification; tRNA-queuosine biosynthesis. Functionally, catalyzes the NADPH-dependent reduction of 7-cyano-7-deazaguanine (preQ0) to 7-aminomethyl-7-deazaguanine (preQ1). The chain is NADPH-dependent 7-cyano-7-deazaguanine reductase from Xanthomonas campestris pv. campestris (strain 8004).